The following is a 157-amino-acid chain: MSQVILDLQIACADSQGLPTEGDFQRWLEAVLPLFQPVSEVTIRLVDEAESHDLNLTYRGKDKSTNVLSFPFEAPPEIELPLLGDLIICRQVVEKEAIEQEKALLAHWAHMVVHGSLHLLGYDHIDDEEAEEMELIETEIMHGLGYPDPYISEKDPD.

Positions 114, 118, and 124 each coordinate Zn(2+).

Belongs to the endoribonuclease YbeY family. Zn(2+) serves as cofactor.

It localises to the cytoplasm. Its function is as follows. Single strand-specific metallo-endoribonuclease involved in late-stage 70S ribosome quality control and in maturation of the 3' terminus of the 16S rRNA. This is Endoribonuclease YbeY from Yersinia pestis.